Here is a 527-residue protein sequence, read N- to C-terminus: Cytochrome P450 monooxyhenase eriA (527 aa).

A helical transmembrane segment spans residues 17–37; that stretch reads LGVVDLSLLGVGAVIAFAWLF. 3 N-linked (GlcNAc...) asparagine glycosylation sites follow: asparagine 77, asparagine 274, and asparagine 297. Cysteine 453 is a heme binding site.

This sequence belongs to the cytochrome P450 family. Heme is required as a cofactor.

The protein localises to the membrane. It carries out the reaction cyathadiol + reduced [NADPH--hemoprotein reductase] + O2 = cyathatriol + oxidized [NADPH--hemoprotein reductase] + H2O + H(+). It participates in secondary metabolite biosynthesis. Cytochrome P450 monooxygenase; part of the gene cluster that mediates the biosynthesis of erinacines, cyathane-xylosides that show unique biological activities, including leishmanicidal activity, stimulating activity for nerve growth-factor synthesis, and agonistic activity toward the kappa opioid receptor. Within the pathway, eriA catalyzes C-11 hydroxylation in the presence of the short chain dehydrogenase/reductase (SDR) eriH, which leads to the production of cyathatriol. The first step of the erinacines biosynthesis pathway is catalyzed by the geranylgeranyl diphosphate (GGPP) synthase eriE via conversion of farnesyl pyrophosphate and isopentyl pyrophosphate into geranylgeranyl pyrophosphate (GGPP). GGPP is then substrate of the diterpene cyclase eriG for the production of cyatha-3,12-diene. The cytochrome P450 monooxygenase eriI then hydroxylates cyatha-3,12-diene at C-14 of the seven-membered ring to produce erinacol, which is further hydroxylated at C-15 by the cytochrome P450 monooxygenase eriC to yield cyathadiol. The cytochrome P450 monooxygenase eriA then catalyzes C-11 hydroxylation in the presence of the short chain dehydrogenase/reductase (SDR) eriH, which leads to the production of cyathatriol. The acetyltransferase eriL converts cyathatriol into 11-O-acetyl-cyathatriol. The SDR eriH catalyzes further oxidation of 11-O-acetyl-cyathatriol into 1-O-acetylcyathin A3. Finally, the glycosyl transferase eriJ tranfers xylose from UDP-xylose onto C-14 of 11-O-acetyl-cyathatriol to form eracine Q. EriJ is also able to convert 11-O-acetyl-cyathatriol to eracine Q2 by using UDP-D-glucose as cosubstrate, but at a lower rate. This is Cytochrome P450 monooxyhenase eriA from Hericium erinaceus (Lion's mane mushroom).